A 149-amino-acid polypeptide reads, in one-letter code: Large ribosomal subunit protein bL9 (149 aa).

Belongs to the bacterial ribosomal protein bL9 family.

Binds to the 23S rRNA. This is Large ribosomal subunit protein bL9 from Xylella fastidiosa (strain M23).